The primary structure comprises 558 residues: DNA ligase B (558 aa).

Catalysis depends on Lys-124, which acts as the N6-AMP-lysine intermediate.

Belongs to the NAD-dependent DNA ligase family. LigB subfamily.

The enzyme catalyses NAD(+) + (deoxyribonucleotide)n-3'-hydroxyl + 5'-phospho-(deoxyribonucleotide)m = (deoxyribonucleotide)n+m + AMP + beta-nicotinamide D-nucleotide.. Functionally, catalyzes the formation of phosphodiester linkages between 5'-phosphoryl and 3'-hydroxyl groups in double-stranded DNA using NAD as a coenzyme and as the energy source for the reaction. The protein is DNA ligase B of Klebsiella pneumoniae (strain 342).